The following is a 272-amino-acid chain: Phosphatidylglycerol--prolipoprotein diacylglyceryl transferase (272 aa).

4 helical membrane passes run 24-44 (WYAL…RHLV), 64-84 (LLVY…VVFY), 99-119 (LWQG…GVML), and 125-145 (GLPT…GLFL). Residue arginine 147 participates in a 1,2-diacyl-sn-glycero-3-phospho-(1'-sn-glycerol) binding. A run of 3 helical transmembrane segments spans residues 185–205 (AAAE…LGAL), 209–229 (GLVT…CEFF), and 245–265 (MGML…AFAY).

Belongs to the Lgt family.

It is found in the cell inner membrane. It catalyses the reaction L-cysteinyl-[prolipoprotein] + a 1,2-diacyl-sn-glycero-3-phospho-(1'-sn-glycerol) = an S-1,2-diacyl-sn-glyceryl-L-cysteinyl-[prolipoprotein] + sn-glycerol 1-phosphate + H(+). The protein operates within protein modification; lipoprotein biosynthesis (diacylglyceryl transfer). Catalyzes the transfer of the diacylglyceryl group from phosphatidylglycerol to the sulfhydryl group of the N-terminal cysteine of a prolipoprotein, the first step in the formation of mature lipoproteins. The polypeptide is Phosphatidylglycerol--prolipoprotein diacylglyceryl transferase (Methylocella silvestris (strain DSM 15510 / CIP 108128 / LMG 27833 / NCIMB 13906 / BL2)).